A 330-amino-acid chain; its full sequence is Flotillin-like protein FloA (330 aa).

The next 2 helical transmembrane spans lie at 6–26 and 28–48; these read LLLF…FTFV and VMLW…TLVG.

It belongs to the flotillin-like FloA family. Homooligomerizes.

It is found in the cell membrane. The protein localises to the membrane raft. In terms of biological role, found in functional membrane microdomains (FMM) that may be equivalent to eukaryotic membrane rafts. FMMs are highly dynamic and increase in number as cells age. Flotillins are thought to be important factors in membrane fluidity. The sequence is that of Flotillin-like protein FloA from Bacillus pumilus (strain SAFR-032).